The chain runs to 736 residues: Phosphoribosylformylglycinamidine synthase subunit PurL (736 aa).

The active site involves H49. Residues Y52 and K91 each contribute to the ATP site. E93 contacts Mg(2+). Residues 94-97 (SHNH) and R116 each bind substrate. The Proton acceptor role is filled by H95. Residue D117 participates in Mg(2+) binding. Position 240 (Q240) interacts with substrate. Mg(2+) is bound at residue D268. A substrate-binding site is contributed by 312–314 (ESQ). D493 and G530 together coordinate ATP. N531 serves as a coordination point for Mg(2+). S533 contributes to the substrate binding site.

The protein belongs to the FGAMS family. In terms of assembly, monomer. Part of the FGAM synthase complex composed of 1 PurL, 1 PurQ and 2 PurS subunits.

The protein resides in the cytoplasm. It carries out the reaction N(2)-formyl-N(1)-(5-phospho-beta-D-ribosyl)glycinamide + L-glutamine + ATP + H2O = 2-formamido-N(1)-(5-O-phospho-beta-D-ribosyl)acetamidine + L-glutamate + ADP + phosphate + H(+). The protein operates within purine metabolism; IMP biosynthesis via de novo pathway; 5-amino-1-(5-phospho-D-ribosyl)imidazole from N(2)-formyl-N(1)-(5-phospho-D-ribosyl)glycinamide: step 1/2. Its function is as follows. Part of the phosphoribosylformylglycinamidine synthase complex involved in the purines biosynthetic pathway. Catalyzes the ATP-dependent conversion of formylglycinamide ribonucleotide (FGAR) and glutamine to yield formylglycinamidine ribonucleotide (FGAM) and glutamate. The FGAM synthase complex is composed of three subunits. PurQ produces an ammonia molecule by converting glutamine to glutamate. PurL transfers the ammonia molecule to FGAR to form FGAM in an ATP-dependent manner. PurS interacts with PurQ and PurL and is thought to assist in the transfer of the ammonia molecule from PurQ to PurL. This chain is Phosphoribosylformylglycinamidine synthase subunit PurL, found in Rhodopseudomonas palustris (strain BisB5).